A 397-amino-acid chain; its full sequence is Decapping and exoribonuclease protein (397 aa).

Residues 1–10 show a composition bias toward basic residues; it reads MEPRGTKRKA. The segment at 1-30 is disordered; the sequence is MEPRGTKRKAEKTEVEKPLNKLPRAVPSLR. Substrate-binding positions include arginine 58, glutamate 101, and 131 to 133; that span reads WRG. Methionine 185 serves as a coordination point for adenosine 3',5'-bisphosphate. Glutamate 192 lines the Mg(2+) pocket. 2 residues coordinate substrate: cysteine 217 and glutamate 234. Mg(2+) is bound by residues glutamate 234, aspartate 236, glutamate 253, and leucine 254. Aspartate 236 lines the adenosine 3',5'-bisphosphate pocket. An adenosine 3',5'-bisphosphate; inhibitor region spans residues 253-256; the sequence is ELKT. Substrate contacts are provided by lysine 255 and glutamine 280. Glutamine 280 lines the adenosine 3',5'-bisphosphate pocket. Threonine 392 is modified (phosphothreonine). Phosphoserine is present on serine 394.

It belongs to the DXO/Dom3Z family. Mg(2+) serves as cofactor.

The protein localises to the nucleus. It catalyses the reaction a 5'-end triphospho-ribonucleoside in mRNA + H2O = a 5'-end phospho-ribonucleoside in mRNA + diphosphate + H(+). The enzyme catalyses a 5'-end NAD(+)-phospho-ribonucleoside in mRNA + H2O = a 5'-end phospho-ribonucleoside in mRNA + NAD(+) + H(+). It carries out the reaction a 5'-end NAD(+)-phospho-ribonucleoside in snoRNA + H2O = a 5'-end phospho-ribonucleoside in snoRNA + NAD(+) + H(+). The catalysed reaction is a 5'-end (N(7)-methyl 5'-triphosphoguanosine)-ribonucleoside-ribonucleotide in mRNA + H2O = a (N(7)-methyl 5'-triphosphoguanosine)-nucleoside + a 5'-end phospho-ribonucleoside in mRNA + H(+). It catalyses the reaction a 5'-end FAD-phospho-ribonucleoside in mRNA + H2O = a 5'-end phospho-ribonucleoside in mRNA + FAD + H(+). The enzyme catalyses a 5'-end CoA-ribonucleoside in mRNA + H2O = 3'-dephospho-CoA + a 5'-end phospho-ribonucleoside in mRNA + H(+). Its activity is regulated as follows. The 5'-3' exoribonuclease activity is inhibited by adenosine 3',5'-bisphosphate. Its function is as follows. Decapping enzyme for NAD-capped RNAs: specifically hydrolyzes the nicotinamide adenine dinucleotide (NAD) cap from a subset of RNAs by removing the entire NAD moiety from the 5'-end of an NAD-capped RNA. The NAD-cap is present at the 5'-end of some RNAs and snoRNAs. In contrast to the canonical 5'-end N7 methylguanosine (m7G) cap, the NAD cap promotes mRNA decay. Preferentially acts on NAD-capped transcripts in response to environmental stress. Also acts as a non-canonical decapping enzyme that removes the entire cap structure of m7G capped or incompletely capped RNAs and mediates their subsequent degradation. Specifically degrades pre-mRNAs with a defective 5'-end m7G cap and is part of a pre-mRNA capping quality control. Has decapping activity toward incomplete 5'-end m7G cap mRNAs such as unmethylated 5'-end-capped RNA (cap0), while it has no activity toward 2'-O-ribose methylated m7G cap (cap1). In contrast to canonical decapping enzymes DCP2 and NUDT16, which cleave the cap within the triphosphate linkage, the decapping activity releases the entire cap structure GpppN and a 5'-end monophosphate RNA. Also has 5'-3' exoribonuclease activities: The 5'-end monophosphate RNA is then degraded by the 5'-3' exoribonuclease activity, enabling this enzyme to decap and degrade incompletely capped mRNAs. Also possesses RNA 5'-pyrophosphohydrolase activity by hydrolyzing the 5'-end triphosphate to release pyrophosphates. Exhibits decapping activity towards FAD-capped RNAs. Exhibits decapping activity towards dpCoA-capped RNAs in vitro. In Mus musculus (Mouse), this protein is Decapping and exoribonuclease protein.